The primary structure comprises 89 residues: Small ribosomal subunit protein uS15 (89 aa).

A compositionally biased stretch (basic and acidic residues) spans 1–21 (MALTTEEKKQVLSEYGLHETD). Residues 1–24 (MALTTEEKKQVLSEYGLHETDTGS) form a disordered region.

Belongs to the universal ribosomal protein uS15 family. As to quaternary structure, part of the 30S ribosomal subunit. Forms a bridge to the 50S subunit in the 70S ribosome, contacting the 23S rRNA.

In terms of biological role, one of the primary rRNA binding proteins, it binds directly to 16S rRNA where it helps nucleate assembly of the platform of the 30S subunit by binding and bridging several RNA helices of the 16S rRNA. Its function is as follows. Forms an intersubunit bridge (bridge B4) with the 23S rRNA of the 50S subunit in the ribosome. The chain is Small ribosomal subunit protein uS15 from Rhodococcus jostii (strain RHA1).